A 405-amino-acid chain; its full sequence is Peroxisome biogenesis factor 3 (405 aa).

The Cytoplasmic portion of the chain corresponds to 1–26 (MENFQFEDLSPNKVSKVYQDLKKFGS). Residues 27-49 (FLYNHKMGVFLVSFSSGVAYLYH) traverse the membrane as a helical segment. Residues 50 to 124 (NITQSHKRKQ…EKLKLTDQLK (75 aa)) are Peroxisomal-facing. A helical membrane pass occupies residues 125–144 (VSIITKLFSVLYIIPMVTIF). Residues 145–405 (NRLQINLIGK…NDLDFNKVQF (261 aa)) are Cytoplasmic-facing.

This sequence belongs to the peroxin-3 family.

Its subcellular location is the peroxisome membrane. Involved in peroxisome biosynthesis. This is Peroxisome biogenesis factor 3 (pex3) from Dictyostelium discoideum (Social amoeba).